The chain runs to 153 residues: MSPSNVFIDSSVMVGLFIGDEKAHKLLSKLINDGFMLCINPIVFSETMFKVTFHIALEDGIRGVYDLKKNLNRYSWVYEEVREKIDKMIKMNYLKILDTNWEVLKLAPEIGKKYNLLTNDAIIIATCKYYRINKLATFDSDFEKVDFIEIIKE.

Residues 6 to 152 form the PINc domain; that stretch reads VFIDSSVMVG…EKVDFIEIIK (147 aa). Positions 9 and 120 each coordinate Mg(2+).

It belongs to the PINc/VapC protein family. It depends on Mg(2+) as a cofactor.

Functionally, toxic component of a type II toxin-antitoxin (TA) system. An RNase. In Methanocaldococcus jannaschii (strain ATCC 43067 / DSM 2661 / JAL-1 / JCM 10045 / NBRC 100440) (Methanococcus jannaschii), this protein is Ribonuclease VapC6.